Consider the following 212-residue polypeptide: Octanoyltransferase (212 aa).

The BPL/LPL catalytic domain occupies 34-208 (GQRQDTLILL…AFERQFNARC (175 aa)). Residues 72–79 (RGGQVTYH), 139–141 (SIG), and 152–154 (GLS) contribute to the substrate site. The Acyl-thioester intermediate role is filled by Cys170.

This sequence belongs to the LipB family.

It localises to the cytoplasm. The enzyme catalyses octanoyl-[ACP] + L-lysyl-[protein] = N(6)-octanoyl-L-lysyl-[protein] + holo-[ACP] + H(+). Its pathway is protein modification; protein lipoylation via endogenous pathway; protein N(6)-(lipoyl)lysine from octanoyl-[acyl-carrier-protein]: step 1/2. In terms of biological role, catalyzes the transfer of endogenously produced octanoic acid from octanoyl-acyl-carrier-protein onto the lipoyl domains of lipoate-dependent enzymes. Lipoyl-ACP can also act as a substrate although octanoyl-ACP is likely to be the physiological substrate. This is Octanoyltransferase from Magnetococcus marinus (strain ATCC BAA-1437 / JCM 17883 / MC-1).